The sequence spans 438 residues: UDP-N-acetylmuramoylalanine--D-glutamate ligase (438 aa).

115–121 (GSNGKST) serves as a coordination point for ATP.

The protein belongs to the MurCDEF family.

The protein resides in the cytoplasm. It carries out the reaction UDP-N-acetyl-alpha-D-muramoyl-L-alanine + D-glutamate + ATP = UDP-N-acetyl-alpha-D-muramoyl-L-alanyl-D-glutamate + ADP + phosphate + H(+). It participates in cell wall biogenesis; peptidoglycan biosynthesis. In terms of biological role, cell wall formation. Catalyzes the addition of glutamate to the nucleotide precursor UDP-N-acetylmuramoyl-L-alanine (UMA). This Vibrio atlanticus (strain LGP32) (Vibrio splendidus (strain Mel32)) protein is UDP-N-acetylmuramoylalanine--D-glutamate ligase.